The primary structure comprises 173 residues: Inorganic pyrophosphatase (173 aa).

Substrate is bound by residues Lys-28, Arg-42, and Tyr-54. The Mg(2+) site is built by Asp-64, Asp-69, and Asp-101. Position 140 (Tyr-140) interacts with substrate.

Belongs to the PPase family. In terms of assembly, homohexamer. Requires Mg(2+) as cofactor.

The protein localises to the cytoplasm. The catalysed reaction is diphosphate + H2O = 2 phosphate + H(+). Its function is as follows. Catalyzes the hydrolysis of inorganic pyrophosphate (PPi) forming two phosphate ions. The sequence is that of Inorganic pyrophosphatase from Helicobacter pylori (strain J99 / ATCC 700824) (Campylobacter pylori J99).